The sequence spans 469 residues: MSAEHVLTMLNEHEVKFVDLRFTDTKGKEQHVTIPAHQVNAEFFEEGKMFDGSSIGGWKGINESDMVLMPDASTAVIDPFFADSTLIIRCDILEPGTLQGYDRDPRSIAKRAEDYLRSTGIADTVLFGPEPEFFLFDDIRFGSSISGSHVAIDDIEGAWNSSTQYEGGNKGHRPAVKGGYFPVPPVDSAQDIRSEMCLVMEQMGLVVEAHHHEVATAGQNEVATRFNTMTKKADEIQIYKYVVHNVAHRFGKTATFMPKPMFGDNGSGMHCHMSLSKNGVNLFAGDKYAGLSEQALYYIGGVIKHAKAINALANPTTNSYKRLVPGYEAPVMLAYSARNRSASIRIPVVSSPKARRIEVRFPDPAANPYLCFAALLMAGLDGIKNKIHPGEAMDKNLYDLPPEEAKEIPQVAGSLEEALNELDLDREFLKAGGVFTDEAIDAYIALRREEDDRVRMTPHPVEFELYYSV.

The region spanning 13–97 (HEVKFVDLRF…IRCDILEPGT (85 aa)) is the GS beta-grasp domain. The GS catalytic domain occupies 105–469 (PRSIAKRAED…PVEFELYYSV (365 aa)). E130 and E132 together coordinate Mg(2+). Residue E208 coordinates ATP. Mg(2+) contacts are provided by E213 and E221. Residues 265–266 (NG) and G266 contribute to the L-glutamate site. Position 270 (H270) interacts with Mg(2+). Residues 272–274 (HMS) and S274 contribute to the ATP site. The L-glutamate site is built by R322, E328, and R340. Positions 340, 345, and 353 each coordinate ATP. Residue E358 participates in Mg(2+) binding. L-glutamate is bound at residue R360. Residue Y398 is modified to O-AMP-tyrosine.

It belongs to the glutamine synthetase family. In terms of assembly, oligomer of 12 subunits arranged in the form of two hexameric ring. Requires Mg(2+) as cofactor.

It localises to the cytoplasm. It carries out the reaction L-glutamate + NH4(+) + ATP = L-glutamine + ADP + phosphate + H(+). The activity of this enzyme could be controlled by adenylation under conditions of abundant glutamine. In terms of biological role, catalyzes the ATP-dependent biosynthesis of glutamine from glutamate and ammonia. The chain is Glutamine synthetase from Escherichia coli O157:H7.